Here is a 123-residue protein sequence, read N- to C-terminus: Sirohydrochlorin cobaltochelatase (123 aa).

Residue histidine 9 is the Proton acceptor of the active site. Histidine 9 is a binding site for Co(2+). Substrate contacts are provided by residues glutamate 43 and 68-73; that span reads FAAGMH. Histidine 73 contributes to the Co(2+) binding site.

Belongs to the CbiX family. CbiXS subfamily. Homotetramer; dimer of dimers.

The enzyme catalyses Co-sirohydrochlorin + 2 H(+) = sirohydrochlorin + Co(2+). It participates in cofactor biosynthesis; adenosylcobalamin biosynthesis; cob(II)yrinate a,c-diamide from sirohydrochlorin (anaerobic route): step 1/10. In terms of biological role, catalyzes the insertion of Co(2+) into sirohydrochlorin as part of the anaerobic pathway to cobalamin biosynthesis. This Sulfolobus acidocaldarius (strain ATCC 33909 / DSM 639 / JCM 8929 / NBRC 15157 / NCIMB 11770) protein is Sirohydrochlorin cobaltochelatase.